Here is a 245-residue protein sequence, read N- to C-terminus: GDSL esterase/lipase At4g16220 (245 aa).

Residues M1–A24 form the signal peptide. S37 (nucleophile) is an active-site residue.

The protein belongs to the 'GDSL' lipolytic enzyme family.

The protein resides in the secreted. The polypeptide is GDSL esterase/lipase At4g16220 (Arabidopsis thaliana (Mouse-ear cress)).